Consider the following 116-residue polypeptide: Cysteine-rich venom protein Cau1 (116 aa).

The region spanning 4–42 is the SCP domain; it reads SYAVVGHYTQIVWYKSDRIGCAAAYCPSSVYNYFYVCQY. 5 disulfides stabilise this stretch: Cys24/Cys40, Cys62/Cys69, Cys65/Cys74, Cys87/Cys105, and Cys96/Cys109. One can recognise a ShKT domain in the interval 78–111; the sequence is CRVEDEFINCKDMAESRDCQDNYMMTNCAAFCSC.

It belongs to the CRISP family. In terms of tissue distribution, expressed by the venom gland.

The protein localises to the secreted. Its function is as follows. Blocks contraction of smooth muscle elicited by high potassium-induced depolarization, but does not block caffeine-stimulated contraction. May target voltage-gated calcium channels on smooth muscle. This Causus rhombeatus (Rhombic night adder) protein is Cysteine-rich venom protein Cau1.